The chain runs to 430 residues: MIQTLVNFFRTKEVRNKIFFTLAMLVIFKIGTYIPAPGVNPAAFDNPQGSQGATELLNTFGGGALKRFSIFAMGIVPYITASIVMQLLQMDIVPKFSEWAKQGEVGRRKLNNVTRYLAISLAFIQSIGMAFQFNNYLKGALIINQSIMSYLLIALVLTAGTAFLIWLGDQITQFGVGNGISIIIFAGILSTLPASLIQFGQTAFVGQEDTSLAWLKVLGLLVSLILLTVGAIYVLEAVRKIPIQYAKKQTAQRLGSQATYLPLKVNSAGVIPVIFAMAFFLLPRTLTLFYPDKEWAQNIANAANPSSNVGMVVYIVLIILFTYFYAFVQVNPEKMADNLKKQGSYVPGIRPGEQTKKYITKVLYRLTFVGSIFLAVISILPILATKFMGLPQSIQIGGTSLLIVIGVAIETMKSLEAQVSQKEYKGFGGR.

The next 10 membrane-spanning stretches (helical) occupy residues 18-38 (IFFTLAMLVIFKIGTYIPAPG), 68-88 (FSIFAMGIVPYITASIVMQLL), 117-137 (LAISLAFIQSIGMAFQFNNYL), 147-167 (IMSYLLIALVLTAGTAFLIWL), 179-199 (GISIIIFAGILSTLPASLIQF), 217-237 (VLGLLVSLILLTVGAIYVLEA), 269-289 (GVIPVIFAMAFFLLPRTLTLF), 308-328 (NVGMVVYIVLIILFTYFYAFV), 368-388 (FVGSIFLAVISILPILATKFM), and 389-409 (GLPQSIQIGGTSLLIVIGVAI).

This sequence belongs to the SecY/SEC61-alpha family. As to quaternary structure, component of the Sec protein translocase complex. Heterotrimer consisting of SecY, SecE and SecG subunits. The heterotrimers can form oligomers, although 1 heterotrimer is thought to be able to translocate proteins. Interacts with the ribosome. Interacts with SecDF, and other proteins may be involved. Interacts with SecA.

Its subcellular location is the cell membrane. The central subunit of the protein translocation channel SecYEG. Consists of two halves formed by TMs 1-5 and 6-10. These two domains form a lateral gate at the front which open onto the bilayer between TMs 2 and 7, and are clamped together by SecE at the back. The channel is closed by both a pore ring composed of hydrophobic SecY resides and a short helix (helix 2A) on the extracellular side of the membrane which forms a plug. The plug probably moves laterally to allow the channel to open. The ring and the pore may move independently. This Staphylococcus aureus (strain NCTC 8325 / PS 47) protein is Protein translocase subunit SecY.